Consider the following 180-residue polypeptide: Stathmin-3 (180 aa).

2 S-palmitoyl cysteine lipidation sites follow: Cys-22 and Cys-24. In terms of domain architecture, SLD spans 38 to 180 (GDMEVKQLDK…NKEQREEMSG (143 aa)). A phosphoserine mark is found at Ser-50, Ser-60, Ser-65, Ser-68, Ser-72, Ser-73, and Ser-81. The tract at residues 59 to 82 (KSPSDLSPESPMLSSPPKKKDTSL) is disordered. Residues 60-74 (SPSDLSPESPMLSSP) show a composition bias toward low complexity. Residues 76–179 (KKKDTSLEEL…RNKEQREEMS (104 aa)) adopt a coiled-coil conformation.

This sequence belongs to the stathmin family. As to quaternary structure, interacts with STAT3. Interacts with CLU (secreted form); this interaction may act as an important modulator during neuronal differentiation. Post-translationally, N-terminal palmitoylation promotes specific anchoring to the cytosolic leaflet of Golgi membranes and subsequent vesicular trafficking along dendrites and axons. Neuronal Stathmins are substrates for palmitoyltransferases ZDHHC3, ZDHHC7 and ZDHHC15.

The protein localises to the golgi apparatus. Its subcellular location is the cell projection. The protein resides in the growth cone. It localises to the axon. It is found in the cytoplasm. The protein localises to the cytosol. Functionally, exhibits microtubule-destabilizing activity, which is antagonized by STAT3. In Macaca fascicularis (Crab-eating macaque), this protein is Stathmin-3 (STMN3).